The sequence spans 627 residues: DNA-directed RNA polymerase subunit gamma (627 aa).

Zn(2+) contacts are provided by Cys-70, Cys-72, Cys-85, and Cys-88. Residues Asp-468, Asp-470, and Asp-472 each coordinate Mg(2+).

The protein belongs to the RNA polymerase beta' chain family. RpoC1 subfamily. As to quaternary structure, in cyanobacteria the RNAP catalytic core is composed of 2 alpha, 1 beta, 1 beta', 1 gamma and 1 omega subunit. When a sigma factor is associated with the core the holoenzyme is formed, which can initiate transcription. Mg(2+) is required as a cofactor. The cofactor is Zn(2+).

It carries out the reaction RNA(n) + a ribonucleoside 5'-triphosphate = RNA(n+1) + diphosphate. Functionally, DNA-dependent RNA polymerase catalyzes the transcription of DNA into RNA using the four ribonucleoside triphosphates as substrates. The protein is DNA-directed RNA polymerase subunit gamma of Synechococcus sp. (strain JA-2-3B'a(2-13)) (Cyanobacteria bacterium Yellowstone B-Prime).